The chain runs to 249 residues: 5'-nucleotidase SurE 2 (249 aa).

D8, D9, S40, and N90 together coordinate a divalent metal cation.

This sequence belongs to the SurE nucleotidase family. A divalent metal cation is required as a cofactor.

The protein resides in the cytoplasm. It catalyses the reaction a ribonucleoside 5'-phosphate + H2O = a ribonucleoside + phosphate. Its function is as follows. Nucleotidase that shows phosphatase activity on nucleoside 5'-monophosphates. The chain is 5'-nucleotidase SurE 2 from Pyrobaculum aerophilum (strain ATCC 51768 / DSM 7523 / JCM 9630 / CIP 104966 / NBRC 100827 / IM2).